The sequence spans 347 residues: Trace amine-associated receptor 4 (347 aa).

The Extracellular segment spans residues 1–37 (MNTPDPWSSPEVQFCFAAANSSCPRKARPALVVCAMY). Asparagine 20 is a glycosylation site (N-linked (GlcNAc...) asparagine). Disulfide bonds link cysteine 23-cysteine 187 and cysteine 106-cysteine 191. Residues 38 to 58 (LIMIGAIVMTMLGNMAVIISI) traverse the membrane as a helical segment. The Cytoplasmic portion of the chain corresponds to 59-69 (AHFKQLHSPTN). Residues 70–90 (FLILSMATTDFLLSCVVMPFS) traverse the membrane as a helical segment. At 91-110 (MIRSIESCWYFGDLFCKVHS) the chain is on the extracellular side. Residues 111–129 (CCDIMLCTTSIFHLCFISV) form a helical membrane-spanning segment. Over 130 to 149 (DRHYAVCDPLHYVTQITTRV) the chain is Cytoplasmic. The helical transmembrane segment at 150-170 (VGVFLLISWSVPIFFAFGLVF) threads the bilayer. Topologically, residues 171–197 (SELNLIGAEDFVAAIDCTGLCVLIFNK) are extracellular. An extracellular Loop 2 (ECL2) region spans residues 175–188 (LIGAEDFVAAIDCT). Residues 198–218 (LWGVLASFIAFFLPGTVMVGI) form a helical membrane-spanning segment. The Cytoplasmic portion of the chain corresponds to 219 to 260 (YIHIFTVAQKHARQIGTGPRTKQALSESKMKATSKKESKATK). The helical transmembrane segment at 261–281 (TLSIVMGVFVLCWLPFFVLTI) threads the bilayer. The Extracellular portion of the chain corresponds to 282-296 (TDPFIDFTTPEDLYN). A helical transmembrane segment spans residues 297 to 317 (VFLWLGYFNSTFNPIIYGMFY). The Cytoplasmic portion of the chain corresponds to 318–347 (PWFRKALRMIVTGTIFRSDSSTSSLHPAHP).

This sequence belongs to the G-protein coupled receptor 1 family. In terms of tissue distribution, specifically expressed in neurons of the olfactory epithelium, to discrete glomeruli predominantly localized to a confined bulb region. Present in the dorsal area of the main olfactory epithelium.

Its subcellular location is the cell membrane. Olfactory receptor specific for 2-phenylethylamine, a trace amine present at high concentration in the urine of carnivore species, playing a key role in fear and avoidance responses. 2-phenylethylamine acts as a kairomone in the chemical detection of carnivore odor and triggers fear in mice. This receptor is probably mediated by the G(s)-class of G-proteins which activate adenylate cyclase. This is Trace amine-associated receptor 4 from Mus musculus (Mouse).